Here is a 172-residue protein sequence, read N- to C-terminus: Signal peptidase complex catalytic subunit SEC11 (172 aa).

The Cytoplasmic portion of the chain corresponds to 1–14; sequence MLSSLGNPRQAAAQ. The helical; Signal-anchor for type II membrane protein transmembrane segment at 15–35 threads the bilayer; sequence LMNFALILSTAFMMWKGLSVI. Topologically, residues 36-172 are lumenal; it reads TDSPSPIVVV…MGLLVVLQRE (137 aa). Residues S49 and H90 each act as charge relay system in the active site. N-linked (GlcNAc...) asparagine glycosylation is present at N111. D115 serves as the catalytic Charge relay system. The tract at residues 158-169 is C-terminal short (CTS) helix; sequence VMLGIMGLLVVL.

Belongs to the peptidase S26B family. In terms of assembly, component of the signal peptidase complex (SPC) composed of a catalytic subunit SEC11 and three accessory subunits SPC1, SPC2 and SPC3. The complex induces a local thinning of the ER membrane which is used to measure the length of the signal peptide (SP) h-region of protein substrates. This ensures the selectivity of the complex towards h-regions shorter than 18-20 amino acids. SPC associates with the translocon complex.

The protein resides in the endoplasmic reticulum membrane. It catalyses the reaction Cleavage of hydrophobic, N-terminal signal or leader sequences from secreted and periplasmic proteins.. Its function is as follows. Catalytic component of the signal peptidase complex (SPC) which catalyzes the cleavage of N-terminal signal sequences from nascent proteins as they are translocated into the lumen of the endoplasmic reticulum. Specifically cleaves N-terminal signal peptides that contain a hydrophobic alpha-helix (h-region) shorter than 18-20 amino acids. This Fusarium vanettenii (strain ATCC MYA-4622 / CBS 123669 / FGSC 9596 / NRRL 45880 / 77-13-4) (Fusarium solani subsp. pisi) protein is Signal peptidase complex catalytic subunit SEC11 (SEC11).